Consider the following 386-residue polypeptide: Chaperone protein DnaJ (386 aa).

One can recognise a J domain in the interval 6–71; the sequence is DYYEILGVDR…QKRARYDQFG (66 aa). The CR-type zinc-finger motif lies at 144 to 226; the sequence is GTEKEVTVSR…CGGKGRVRKH (83 aa). 8 residues coordinate Zn(2+): C157, C160, C174, C177, C200, C203, C214, and C217. CXXCXGXG motif repeat units lie at residues 157-164, 174-181, 200-207, and 214-221; these read CPTCSGSG, CRQCNGTG, CDVCHGEG, and CETCGGKG.

The protein belongs to the DnaJ family. Homodimer. Zn(2+) serves as cofactor.

The protein localises to the cytoplasm. Functionally, participates actively in the response to hyperosmotic and heat shock by preventing the aggregation of stress-denatured proteins and by disaggregating proteins, also in an autonomous, DnaK-independent fashion. Unfolded proteins bind initially to DnaJ; upon interaction with the DnaJ-bound protein, DnaK hydrolyzes its bound ATP, resulting in the formation of a stable complex. GrpE releases ADP from DnaK; ATP binding to DnaK triggers the release of the substrate protein, thus completing the reaction cycle. Several rounds of ATP-dependent interactions between DnaJ, DnaK and GrpE are required for fully efficient folding. Also involved, together with DnaK and GrpE, in the DNA replication of plasmids through activation of initiation proteins. This chain is Chaperone protein DnaJ, found in Acetivibrio thermocellus (strain ATCC 27405 / DSM 1237 / JCM 9322 / NBRC 103400 / NCIMB 10682 / NRRL B-4536 / VPI 7372) (Clostridium thermocellum).